A 442-amino-acid chain; its full sequence is Putative pyrimidine permease RutG (442 aa).

Residues 1 to 57 (MAMFGFPHWQLKSTSTESGVVAPDERLPFAQTAVMGVQHAVAMFGATVLMPILMGLD) lie on the Cytoplasmic side of the membrane. Residues 58–78 (PNLSILMSGIGTLLFFFITGG) traverse the membrane as a helical segment. A topological domain (periplasmic) is located at residue Arg79. Residues 80-100 (VPSYLGSSAAFVGVVIAATGF) traverse the membrane as a helical segment. The Cytoplasmic portion of the chain corresponds to 101–110 (NGQGINPNIS). A helical transmembrane segment spans residues 111–131 (IALGGIIACGLVYTVIGLVVM). Residues 132–140 (KIGTRWIER) lie on the Periplasmic side of the membrane. The chain crosses the membrane as a helical span at residues 141–161 (LMPPVVTGAVVMAIGLNLAPI). Over 162 to 169 (AVKSVSAS) the chain is Cytoplasmic. Residues 170 to 190 (AFDSWMAVMTVLCIGLVAVFT) form a helical membrane-spanning segment. The Periplasmic segment spans residues 191–196 (RGMIQR). The chain crosses the membrane as a helical span at residues 197–217 (LLILVGLIVACLLYGVMTNVL). Over 218-240 (GLGKAVDFTLVSHAAWFGLPHFS) the chain is Cytoplasmic. The helical transmembrane segment at 241–261 (TPAFNGQAMMLIAPVAVILVA) threads the bilayer. The Periplasmic segment spans residues 262–284 (ENLGHLKAVAGMTGRNMDPYMGR). Residues 285-305 (AFVGDGLATMLSGSVGGSGVT) traverse the membrane as a helical segment. Topologically, residues 306–318 (TYAENIGVMAVTK) are cytoplasmic. Residues 319-339 (VYSTLVFVAAAVIAMLLGFSP) form a helical membrane-spanning segment. Topologically, residues 340-347 (KFGALIHT) are periplasmic. A helical membrane pass occupies residues 348–368 (IPAAVIGGASIVVFGLIAVAG). Over 369-385 (ARIWVQNRVDLSQNGNL) the chain is Cytoplasmic. Helical transmembrane passes span 386 to 406 (IMVA…LGGF) and 407 to 427 (TLGG…LLSR). At 428–442 (KLVDVPPPEVVHQEP) the chain is on the cytoplasmic side.

Belongs to the nucleobase:cation symporter-2 (NCS2) (TC 2.A.40) family.

It localises to the cell inner membrane. Its function is as follows. May function as a proton-driven pyrimidine uptake system. In Escherichia coli (strain K12), this protein is Putative pyrimidine permease RutG (rutG).